The chain runs to 143 residues: MQEIEIFCDGSSLGNPGPGGYAAILRYKDKEKTISGGENFTTNNRMELRALNEALKILKRPCHITLYSDSQYVCQAINVWLVNWQKKNFAKVKNVDLWKEFVKVSKGHSIVAVWIKGHNGHAENERCNSLAKLEAQKRVKTTT.

The RNase H type-1 domain occupies 1–136 (MQEIEIFCDG…CNSLAKLEAQ (136 aa)). Positions 9, 47, 69, and 128 each coordinate Mg(2+).

Belongs to the RNase H family. Monomer. The cofactor is Mg(2+).

It is found in the cytoplasm. It catalyses the reaction Endonucleolytic cleavage to 5'-phosphomonoester.. Functionally, endonuclease that specifically degrades the RNA of RNA-DNA hybrids. The protein is Ribonuclease HI (rnhA) of Helicobacter pylori (strain J99 / ATCC 700824) (Campylobacter pylori J99).